Here is a 244-residue protein sequence, read N- to C-terminus: Leucyl/phenylalanyl-tRNA--protein transferase (244 aa).

It belongs to the L/F-transferase family.

Its subcellular location is the cytoplasm. The catalysed reaction is N-terminal L-lysyl-[protein] + L-leucyl-tRNA(Leu) = N-terminal L-leucyl-L-lysyl-[protein] + tRNA(Leu) + H(+). It catalyses the reaction N-terminal L-arginyl-[protein] + L-leucyl-tRNA(Leu) = N-terminal L-leucyl-L-arginyl-[protein] + tRNA(Leu) + H(+). The enzyme catalyses L-phenylalanyl-tRNA(Phe) + an N-terminal L-alpha-aminoacyl-[protein] = an N-terminal L-phenylalanyl-L-alpha-aminoacyl-[protein] + tRNA(Phe). Its function is as follows. Functions in the N-end rule pathway of protein degradation where it conjugates Leu, Phe and, less efficiently, Met from aminoacyl-tRNAs to the N-termini of proteins containing an N-terminal arginine or lysine. The chain is Leucyl/phenylalanyl-tRNA--protein transferase from Thermodesulfovibrio yellowstonii (strain ATCC 51303 / DSM 11347 / YP87).